The primary structure comprises 530 residues: uncharacterized protein (530 aa).

The disordered stretch occupies residues 362-408 (NLTPKLNKTNEDIKSDSTSQPQGFPEGNRRVMENPETKVSKTDDEEM). Positions 388–403 (GNRRVMENPETKVSKT) are enriched in basic and acidic residues.

This sequence belongs to the IIV-6 030L family.

This is an uncharacterized protein from Invertebrate iridescent virus 6 (IIV-6).